A 98-amino-acid chain; its full sequence is Small ribosomal subunit protein uS19c (98 aa).

This sequence belongs to the universal ribosomal protein uS19 family.

It localises to the plastid. The protein resides in the chloroplast. In terms of biological role, protein S19 forms a complex with S13 that binds strongly to the 16S ribosomal RNA. This Jasminum nudiflorum (Winter jasmine) protein is Small ribosomal subunit protein uS19c.